Consider the following 1261-residue polypeptide: ABC-type transmembrane transporter verA (1261 aa).

Residues 41 to 61 form a helical membrane-spanning segment; it reads IGCAFAAVCSGAAMPLMALIL. The region spanning 41–334 is the ABC transmembrane type-1 1 domain; it reads IGCAFAAVCS…LGPNMPSFIK (294 aa). The N-linked (GlcNAc...) asparagine glycan is linked to N67. A run of 5 helical transmembrane segments spans residues 92 to 112, 166 to 186, 190 to 210, 270 to 290, and 308 to 328; these read LWFV…SFGF, LGIM…AFSQ, LTLV…FIVS, FVGL…AIGF, and ILSV…LGPN. Positions 374–618 constitute an ABC transporter 1 domain; that stretch reads VELRDMSFAY…GGLYKRLYDA (245 aa). N396 carries N-linked (GlcNAc...) asparagine glycosylation. 409-416 is a binding site for ATP; sequence GPSGAGKS. N463 is a glycosylation site (N-linked (GlcNAc...) asparagine). 6 helical membrane passes run 686–706, 734–754, 808–828, 830–850, 913–933, and 950–970; these read YWPI…IFPV, LMFF…GFFM, MGLL…GLAY, WKFA…AGYL, VMTL…ALGF, and FFTV…LFGF. The region spanning 691 to 976 is the ABC transmembrane type-1 2 domain; it reads LIGLVACVVT…LFGFSSNLGK (286 aa). Residues N1007 and N1021 are each glycosylated (N-linked (GlcNAc...) asparagine). The ABC transporter 2 domain maps to 1017–1255; the sequence is VDMQNVTFAY…QGNYFKMHES (239 aa). Residue 1052 to 1059 coordinates ATP; that stretch reads GTSGSGKS. The N-linked (GlcNAc...) asparagine glycan is linked to N1106.

Belongs to the ABC transporter superfamily. ABCB family. Multidrug resistance exporter (TC 3.A.1.201) subfamily.

The protein localises to the cell membrane. Functionally, ABC-type transmembrane transporter; part of the gene cluster that mediates the biosynthesis of 11'-deoxyverticillin A, one of the dimeric epipolythiodioxopiperazines (ETPs) from the verticillin family that are toxic secondary metabolites. The verA multidrug transporter is probably involved in the secretion of 11'-deoxyverticillin A. This Clonostachys rogersoniana protein is ABC-type transmembrane transporter verA.